Here is a 384-residue protein sequence, read N- to C-terminus: Ribosomal RNA small subunit methyltransferase H (384 aa).

Residues 99–101 (GGH), Asp118, Tyr145, Asp169, and Gln176 contribute to the S-adenosyl-L-methionine site.

Belongs to the methyltransferase superfamily. RsmH family.

It is found in the cytoplasm. The catalysed reaction is cytidine(1402) in 16S rRNA + S-adenosyl-L-methionine = N(4)-methylcytidine(1402) in 16S rRNA + S-adenosyl-L-homocysteine + H(+). Functionally, specifically methylates the N4 position of cytidine in position 1402 (C1402) of 16S rRNA. This is Ribosomal RNA small subunit methyltransferase H from Mycobacteroides abscessus (strain ATCC 19977 / DSM 44196 / CCUG 20993 / CIP 104536 / JCM 13569 / NCTC 13031 / TMC 1543 / L948) (Mycobacterium abscessus).